We begin with the raw amino-acid sequence, 62 residues long: Large ribosomal subunit protein bL28 (62 aa).

The protein belongs to the bacterial ribosomal protein bL28 family.

The sequence is that of Large ribosomal subunit protein bL28 from Staphylococcus epidermidis (strain ATCC 12228 / FDA PCI 1200).